The chain runs to 541 residues: 2-succinyl-5-enolpyruvyl-6-hydroxy-3-cyclohexene-1-carboxylate synthase (541 aa).

Belongs to the TPP enzyme family. MenD subfamily. Homodimer. Mg(2+) serves as cofactor. Mn(2+) is required as a cofactor. The cofactor is thiamine diphosphate.

The catalysed reaction is isochorismate + 2-oxoglutarate + H(+) = 5-enolpyruvoyl-6-hydroxy-2-succinyl-cyclohex-3-ene-1-carboxylate + CO2. The protein operates within quinol/quinone metabolism; 1,4-dihydroxy-2-naphthoate biosynthesis; 1,4-dihydroxy-2-naphthoate from chorismate: step 2/7. It functions in the pathway quinol/quinone metabolism; menaquinone biosynthesis. Catalyzes the thiamine diphosphate-dependent decarboxylation of 2-oxoglutarate and the subsequent addition of the resulting succinic semialdehyde-thiamine pyrophosphate anion to isochorismate to yield 2-succinyl-5-enolpyruvyl-6-hydroxy-3-cyclohexene-1-carboxylate (SEPHCHC). This chain is 2-succinyl-5-enolpyruvyl-6-hydroxy-3-cyclohexene-1-carboxylate synthase, found in Rhodococcus jostii (strain RHA1).